A 50-amino-acid polypeptide reads, in one-letter code: MNKSQDKEKKYFLEYLSLAPVLAVISISVAFSTWAIFNYIFPDLLFHPLP.

A helical transmembrane segment spans residues 21–41 (VLAVISISVAFSTWAIFNYIF).

It belongs to the PsaJ family.

Its subcellular location is the cellular thylakoid membrane. The chain is PsaJ-like protein asl3190 from Nostoc sp. (strain PCC 7120 / SAG 25.82 / UTEX 2576).